Here is a 322-residue protein sequence, read N- to C-terminus: Ferredoxin--NADP reductase (322 aa).

Residues Asp34, Gln42, Tyr47, Val87, Phe120, Asp279, and Thr320 each contribute to the FAD site.

The protein belongs to the ferredoxin--NADP reductase type 2 family. In terms of assembly, homodimer. FAD is required as a cofactor.

The enzyme catalyses 2 reduced [2Fe-2S]-[ferredoxin] + NADP(+) + H(+) = 2 oxidized [2Fe-2S]-[ferredoxin] + NADPH. The polypeptide is Ferredoxin--NADP reductase (Streptococcus sanguinis (strain SK36)).